We begin with the raw amino-acid sequence, 222 residues long: uncharacterized protein (222 aa).

This is an uncharacterized protein from Pyrococcus woesei.